We begin with the raw amino-acid sequence, 801 residues long: Na(+)/H(+) antiporter subunit A1 (801 aa).

The next 20 helical transmembrane spans lie at 1 to 21 (MSLL…IPFL), 30 to 50 (LGWF…SLIS), 79 to 99 (LGLL…LYSI), 117 to 137 (LFMG…LYLF), 166 to 186 (LIIT…LSLA), 206 to 226 (PFFI…SAQV), 228 to 250 (FYIW…HSAT), 265 to 285 (IFAI…ITLF), 300 to 320 (ILAF…GIGA), 337 to 357 (FVAA…LFMI), 373 to 393 (LGGL…TTLS), 427 to 447 (LGIL…VYSI), 472 to 492 (ILML…GLFP), 522 to 542 (GITP…LLLI), 591 to 611 (LVII…SVPF), 623 to 643 (VFEG…IFAK), 646 to 666 (LFSI…FIFF), 671 to 691 (LALT…LCFY), 707 to 727 (LTNA…GLIG), and 764 to 784 (MDTL…YTMI).

The protein belongs to the CPA3 antiporters (TC 2.A.63) subunit A family. In terms of assembly, may form a heterooligomeric complex that consists of seven subunits: mnhA1, mnhB1, mnhC1, mnhD1, mnhE1, mnhF1 and mnhG1.

It is found in the cell membrane. Mnh complex is a Na(+)/H(+) antiporter involved in Na(+) excretion. The protein is Na(+)/H(+) antiporter subunit A1 (mnhA1) of Staphylococcus epidermidis (strain ATCC 35984 / DSM 28319 / BCRC 17069 / CCUG 31568 / BM 3577 / RP62A).